A 448-amino-acid chain; its full sequence is Argininosuccinate synthase (448 aa).

Residues 17 to 25 and Ala-43 contribute to the ATP site; that span reads AFSGGLDTS. Tyr-99 contributes to the L-citrulline binding site. Residues Gly-129 and Thr-131 each coordinate ATP. Thr-131, Asn-135, and Asp-136 together coordinate L-aspartate. Asn-135 provides a ligand contact to L-citrulline. Asp-136 contacts ATP. L-citrulline contacts are provided by Arg-139 and Ser-192. Residue Asp-194 participates in ATP binding. L-citrulline-binding residues include Thr-201, Glu-203, and Glu-280.

The protein belongs to the argininosuccinate synthase family. Type 2 subfamily. In terms of assembly, homotetramer.

Its subcellular location is the cytoplasm. The enzyme catalyses L-citrulline + L-aspartate + ATP = 2-(N(omega)-L-arginino)succinate + AMP + diphosphate + H(+). The protein operates within amino-acid biosynthesis; L-arginine biosynthesis; L-arginine from L-ornithine and carbamoyl phosphate: step 2/3. The protein is Argininosuccinate synthase of Acidovorax ebreus (strain TPSY) (Diaphorobacter sp. (strain TPSY)).